The primary structure comprises 1182 residues: MKTYQIGKRTRYSFGKVDEIIQVPDLVEIQRKSFEELLNHGILRILKKFSPITSAKVEGRREKGFNLEFVNFRVGAPLHSVEECKQRLLTYVAPFYATVRVTDVSTGEMREEEVSLGNYPIMTENQTFVINGVERVVVSQLVRSPGVYFVEEPTKNIGAKPIYLAHFLPVRGVWLEIMLNLNDETLYARIDRRKRLNLFLVLKTLGFQNDIDILSLFPAYLDVEDDYSLKQSEGIIILEKIVSKSGEVIAEKGSVLTSTLVEILREHGIEKIKVVNNYMFKTYMKLKEKLKMPLEENISELRAFMEIYKELRPGEVFRYNAAKSYWNNLYFNEERFELSEVGRYKMNKKLTNAYRKYLIEIEGRNPKSVERIEYEEKSNALTPIDIILVIRMLLETEKHPETLDTKDHLSNKRVKTVGELIGSEFERAFSKSIHQIQEKLATYTSLDKISIPSLINLRNVIASLNSFFATNPLSQFMDQVNPIAELTHKRRLTAVGPGGLKRERARFEVRDVHHSHYGRMCPIETPEGGNIGLITSLSVYATIDEYGFLVTPYRRITNGKLANEVVYLAADEEENYKIASVTIAFDKEGNIIQERVPVRYLEKIVYVHKNEVDLVDISPKQIVSVTTSLIPFLEHDDANRALMGSNMQRQAVPVIKPEAPFVGTGMEYAAAIYSGHVVLAKNDGVVKKVDGRKIIIHRIDENGQLMYDKKGNPIIDEYTLLKYVRSNQDTSITQKPIVNVGDFVKKGSPIADGPATDNGELALGKNVLVAFLPWEGYNFEDAILVSEELLEEDTFTSVHIEVYETTARETRVGPEEITSEIPNVSKENIRNLDENGIIRIGAYVGKQKYFTSQDILVGKVTPKGESDASPEEKIMRSVFGEKGKDVKDSSLRVPHGVEGRVIGVHVFHKEEVGDLGPGVNTLVRVYLATRKPLEVGDKLAGRHGNKGVVSMILPKEDMPFLPDGTPVQVVLSPLGVPSRMNIGQVLETSLGWLAKLTNRYFATPVFDGAKEDDILPELYKVRETLNLHHGDDPNNPSGKVTLRDGRTGKEFDFPVLVGYMYIMKLIHIARDKIHARATGPYSLIHQQPLGGKAQFGGQRFGEMEVWALEAYGASYTLNEMLTVKSDDIKGRTEVYKAIMKSKNLPEPGLPESFKVLVRELKGLALDVRVYDEHGNEIDIEKL.

The protein belongs to the RNA polymerase beta chain family. In terms of assembly, the RNAP catalytic core consists of 2 alpha, 1 beta, 1 beta' and 1 omega subunit. When a sigma factor is associated with the core the holoenzyme is formed, which can initiate transcription.

The enzyme catalyses RNA(n) + a ribonucleoside 5'-triphosphate = RNA(n+1) + diphosphate. Its function is as follows. DNA-dependent RNA polymerase catalyzes the transcription of DNA into RNA using the four ribonucleoside triphosphates as substrates. This is DNA-directed RNA polymerase subunit beta from Fervidobacterium nodosum (strain ATCC 35602 / DSM 5306 / Rt17-B1).